Here is a 491-residue protein sequence, read N- to C-terminus: (S)-canadine synthase (491 aa).

A helical membrane pass occupies residues 6–26; the sequence is LLVCATVAIVFATTTIIRILF. Heme is bound at residue Cys434.

The protein belongs to the cytochrome P450 family. Requires heme as cofactor. As to expression, expressed at low levels in roots.

It is found in the endoplasmic reticulum membrane. The protein resides in the microsome membrane. The catalysed reaction is (S)-tetrahydrocolumbamine + reduced [NADPH--hemoprotein reductase] + O2 = (S)-canadine + oxidized [NADPH--hemoprotein reductase] + 2 H2O + H(+). Functionally, involved in the last but one step of the biosynthesis of berberine, an antimicrobial benzylisoquinoline alkaloid. Converts (S)-tetrahydrocolumbamine (THC) to (S)-tetrahydroberberine (THB) also called (S)-canadine. This chain is (S)-canadine synthase (CYP719A1), found in Coptis japonica (Japanese goldthread).